The primary structure comprises 507 residues: ATP synthase subunit alpha, chloroplastic (507 aa).

Residue 170 to 177 (GDRQTGKT) coordinates ATP. Phosphothreonine is present on threonine 257.

It belongs to the ATPase alpha/beta chains family. F-type ATPases have 2 components, CF(1) - the catalytic core - and CF(0) - the membrane proton channel. CF(1) has five subunits: alpha(3), beta(3), gamma(1), delta(1), epsilon(1). CF(0) has four main subunits: a, b, b' and c.

The protein resides in the plastid. It is found in the chloroplast thylakoid membrane. It catalyses the reaction ATP + H2O + 4 H(+)(in) = ADP + phosphate + 5 H(+)(out). Functionally, produces ATP from ADP in the presence of a proton gradient across the membrane. The alpha chain is a regulatory subunit. This Crucihimalaya wallichii (Rock-cress) protein is ATP synthase subunit alpha, chloroplastic.